A 61-amino-acid chain; its full sequence is Conotoxin Tx-D021 (61 aa).

A signal peptide spans 1–22; that stretch reads MRCLPVFVILLLLIASTPSVDA. Positions 23–48 are excised as a propeptide; the sequence is RAKTRDDMSLASFHDDAKRILQILQD. Cys60 carries the cysteine amide modification.

It belongs to the conotoxin T superfamily. In terms of processing, contains 2 disulfide bonds that can be either 'C1-C3, C2-C4' or 'C1-C4, C2-C3', since these disulfide connectivities have been observed for conotoxins with cysteine framework V (for examples, see AC P0DQQ7 and AC P81755). As to expression, expressed by the venom duct.

It localises to the secreted. The sequence is that of Conotoxin Tx-D021 from Conus textile (Cloth-of-gold cone).